A 560-amino-acid polypeptide reads, in one-letter code: MRIEPGDSFWTKKAMFSNAERQYFETVRPRKTSLPGSTAPNIAAPVTKATKKNKTMAEMMPNKLLYMNPLTMEAHFFLQTLNSVNQTTNPPQLDPHLANLLERIMVGIESYLDRNPTYVLPQEMAAPGEGVAFVQPQELQTIKRTFSCSSCSNRIVGTTIAKAVAHLSEQHPKPNPNNQPVQPHPTHQTKQEKKQAQVKARQHITVRLPKKARAMIVGEITNVFKDKYPIADKLKVIPEYDVIEQDLCKLLSPGFPKQPLRVYKFGSRITGIGNRSSDLDLFVDIGNTFHTFEHRASNATVAKLRAMRKFFCDSEDWRLINFIEQARVPIIKTCHLPTGIECDICLNSMGFCNTNLLKYIFESQPLTQYMCIYVKNWLERCKLTEQISTYSITLMVIYFLQLQALLPPIAMLQIEDAANQAVLVGPWVVNFAQKSFSELGLQQLKATVPVIKGFLRNFFAYFAKFDYEHFLVCPYIGQANVEIAKIERMLHARYSAYVSDNPECSIQLKKPMVVQDPIQLNHNVTKAVTKYGLQTFVDYCQQTAELLEEPSTNWRQRYAF.

Positions 169-197 (EQHPKPNPNNQPVQPHPTHQTKQEKKQAQ) are disordered. Low complexity predominate over residues 176-188 (PNNQPVQPHPTHQ). Residues D278 and D280 each coordinate Mg(2+). Positions 455–522 (LRNFFAYFAK…VVQDPIQLNH (68 aa)) constitute a PAP-associated domain.

Requires Mg(2+) as cofactor.

The protein localises to the cytoplasm. The enzyme catalyses RNA(n) + UTP = RNA(n)-3'-uridine ribonucleotide + diphosphate. In terms of biological role, uridylyltransferase which mediates terminal uridylation of miRNAs, leading to their degradation. Has high specificity for splicing-derived miRNAs (mirtrons) and other miRNA substrates containing a 3'-G terminal nucleotide. Appears to be a major suppressor of mirtron biogenesis. This Drosophila melanogaster (Fruit fly) protein is Terminal uridylyltransferase Tailor.